The primary structure comprises 1816 residues: Kinesin-like protein KIF1B (1816 aa).

S2 carries the post-translational modification N-acetylserine. The region spanning 5–354 (SVKVAVRVRP…LRYADRAKQI (350 aa)) is the Kinesin motor domain. 97-104 (GQTGAGKS) contacts ATP. The segment at 270 to 350 (NINKSLTTLG…TLSTLRYADR (81 aa)) is interaction with KIFBP. 2 coiled-coil regions span residues 365 to 386 (NAKLVRELKEEVTRLKDLLRAQ) and 470 to 502 (GEEAIERLKESEKIIAELNETWEEKLRKTEAIR). Residues 556–612 (TRVGQADAERRQDIVLSGAHIKEEHCLFRSERSNTGEVIVTLEPCERSETYVNGKRV) enclose the FHA domain. Phosphothreonine is present on residues T647 and T652. Coiled coils occupy residues 668 to 737 (EKQG…EEEV) and 841 to 869 (SLDKLKQRLDLMREMYDRAGEVASSAQDD). 5 positions are modified to phosphoserine: S1054, S1057, S1416, S1454, and S1487. The tract at residues 1522-1571 (VPKSLSDSLSPSLSSGTLSTSTSISSQISTTTFESAITPSESSGYDSADV) is disordered. Low complexity predominate over residues 1525–1553 (SLSDSLSPSLSSGTLSTSTSISSQISTTT). Residues 1554 to 1566 (FESAITPSESSGY) show a composition bias toward polar residues. Residues S1573, S1603, S1610, and S1613 each carry the phosphoserine modification. Over residues 1620–1637 (SVSSFSSSTLTPSSTCPS) the composition is skewed to low complexity. Residues 1620–1659 (SVSSFSSSTLTPSSTCPSLVDSRSSSMDQKTPEANSRASS) form a disordered region. The segment covering 1640 to 1659 (DSRSSSMDQKTPEANSRASS) has biased composition (polar residues). The region spanning 1702–1799 (VSKKGYLHFK…WLYAFNPLLA (98 aa)) is the PH domain.

The protein belongs to the TRAFAC class myosin-kinesin ATPase superfamily. Kinesin family. Unc-104 subfamily. Monomer. Interacts with KIFBP; positively regulates KIF1B microtubule motor activity. Interacts (via C-terminus end of the kinesin-motor domain) with CHP1; the interaction occurs in a calcium-dependent manner. As to quaternary structure, interacts with MADD (via death domain); links this isoform to Rab3-carrying vesicles in anterograde synaptic vesicle transport. Expressed in the brain (at protein level).

The protein resides in the cytoplasm. Its subcellular location is the cytoskeleton. It localises to the cytoplasmic vesicle. It is found in the secretory vesicle. The protein localises to the synaptic vesicle membrane. The protein resides in the mitochondrion. The enzyme catalyses ATP + H2O + a kinesin associated with a microtubule at position (n) = ADP + phosphate a kinesin associated with a microtubule at position (n+1, toward the plus end).. Has a plus-end-directed microtubule motor activity and functions as a motor for transport of vesicles and organelles along microtubules. Functionally, has a plus-end-directed microtubule motor activity and functions as a motor for anterograde synaptic vesicle transport along axonal microtubules from the cell body to the presynapse in neuronal cells. Functions as a downstream effector in a developmental apoptotic pathway that is activated when nerve growth factor (NGF) becomes limiting for neuronal progenitor cells. In terms of biological role, has a plus-end-directed microtubule motor activity and functions as a motor for anterograde transport of mitochondria. This Mus musculus (Mouse) protein is Kinesin-like protein KIF1B.